The chain runs to 111 residues: MSDKTMKDIQAEVDRYIGQFKEGYFSPLAMMARLTEELGELAREVNHRYGEKPKKATEDDKSMEEEIGDVLFVLVCLANSLDISLEEAHDRVMHKFNTRDKDRWTRKEEGK.

Homodimer, or homotetramer.

This is an uncharacterized protein from Bacillus subtilis (strain 168).